Reading from the N-terminus, the 157-residue chain is Cyclic pyranopterin monophosphate synthase (157 aa).

Residues 74 to 76 (MCH) and 112 to 113 (ME) contribute to the substrate site. The active site involves D127.

Belongs to the MoaC family. In terms of assembly, homohexamer; trimer of dimers.

It catalyses the reaction (8S)-3',8-cyclo-7,8-dihydroguanosine 5'-triphosphate = cyclic pyranopterin phosphate + diphosphate. It participates in cofactor biosynthesis; molybdopterin biosynthesis. Its function is as follows. Catalyzes the conversion of (8S)-3',8-cyclo-7,8-dihydroguanosine 5'-triphosphate to cyclic pyranopterin monophosphate (cPMP). The chain is Cyclic pyranopterin monophosphate synthase from Sulfurovum sp. (strain NBC37-1).